The primary structure comprises 187 residues: Large ribosomal subunit protein uL6 (187 aa).

It belongs to the universal ribosomal protein uL6 family. In terms of assembly, part of the 50S ribosomal subunit.

This protein binds to the 23S rRNA, and is important in its secondary structure. It is located near the subunit interface in the base of the L7/L12 stalk, and near the tRNA binding site of the peptidyltransferase center. In Roseiflexus castenholzii (strain DSM 13941 / HLO8), this protein is Large ribosomal subunit protein uL6.